We begin with the raw amino-acid sequence, 376 residues long: Endo-1,4-beta-xylanase A (376 aa).

The first 18 residues, 1 to 18 (MHLASSLFLLATLPFGFA), serve as a signal peptide directing secretion. Residues 55–355 (QRERAGLEDK…HPAYYGVVEA (301 aa)) enclose the GH10 domain. An N-linked (GlcNAc...) asparagine glycan is attached at Asn100. Glu170 serves as the catalytic Proton donor. Glu277 (nucleophile) is an active-site residue. Asn358 is a glycosylation site (N-linked (GlcNAc...) asparagine).

The protein belongs to the glycosyl hydrolase 10 (cellulase F) family.

It localises to the secreted. The enzyme catalyses Endohydrolysis of (1-&gt;4)-beta-D-xylosidic linkages in xylans.. Its pathway is glycan degradation; xylan degradation. Partial inhibition of activity is detected in the presence of Ag(+), Cu2(+) and SDS. Like most fungal xylanases, activity is completely inhibited by Hg(2+) since Hg(2+) could interact with tryptophan residues and oxidize the indole ring. Beta-mercaptoethanol enhances the enzymatic activity by counteracting the oxidation effects of the S-S linkage between cysteine residues. Its function is as follows. Endo-1,4-beta-xylanase involved in the hydrolysis of xylan, a major structural heterogeneous polysaccharide found in plant biomass representing the second most abundant polysaccharide in the biosphere, after cellulose. Is most active on birchwood xylan (defined as 100%), moderate on beechwood xylan (96.8%) and soluble wheat arabinoxylan (84.5%), and weak on insoluble wheat arabinoxylan (19.7%). Hydrolyzes substrates into a mixture of xylobiose and xylotriose, but no xylose. No activity was detected in the presence of barley beta-glucan, carboxymethyl cellulose-sodium (CMC-Na), and Avicel. Acts as an alkali-tolerant xylanase, exhibiting 68.8% of the activity at pH 9.0, and even 31.8% at pH 10.0. The polypeptide is Endo-1,4-beta-xylanase A (Humicola insolens (Soft-rot fungus)).